The sequence spans 49 residues: Heme exporter protein C (49 aa).

The protein belongs to the CcmC/CycZ/HelC family.

The protein resides in the cell inner membrane. Required for the export of heme to the periplasm for the biogenesis of c-type cytochromes. The polypeptide is Heme exporter protein C (Rhizobium leguminosarum bv. viciae).